A 211-amino-acid chain; its full sequence is tRNA (guanosine(18)-2'-O)-methyltransferase (211 aa).

S-adenosyl-L-methionine-binding residues include T103, I146, and L155.

It belongs to the class IV-like SAM-binding methyltransferase superfamily. RNA methyltransferase TrmH family. As to quaternary structure, homodimer.

The catalysed reaction is guanosine(18) in tRNA + S-adenosyl-L-methionine = 2'-O-methylguanosine(18) in tRNA + S-adenosyl-L-homocysteine + H(+). Its function is as follows. Catalyzes the 2'-O methylation of guanosine at position 18 in tRNA. Type II methylase, which methylates only a subset of tRNA species. This chain is tRNA (guanosine(18)-2'-O)-methyltransferase, found in Aquifex aeolicus (strain VF5).